The primary structure comprises 364 residues: UDP-N-acetylglucosamine--N-acetylmuramyl-(pentapeptide) pyrophosphoryl-undecaprenol N-acetylglucosamine transferase (364 aa).

Residues 10–12 (TGG), asparagine 123, serine 198, isoleucine 251, and glutamine 296 each bind UDP-N-acetyl-alpha-D-glucosamine.

Belongs to the glycosyltransferase 28 family. MurG subfamily.

The protein localises to the cell membrane. It carries out the reaction di-trans,octa-cis-undecaprenyl diphospho-N-acetyl-alpha-D-muramoyl-L-alanyl-D-glutamyl-meso-2,6-diaminopimeloyl-D-alanyl-D-alanine + UDP-N-acetyl-alpha-D-glucosamine = di-trans,octa-cis-undecaprenyl diphospho-[N-acetyl-alpha-D-glucosaminyl-(1-&gt;4)]-N-acetyl-alpha-D-muramoyl-L-alanyl-D-glutamyl-meso-2,6-diaminopimeloyl-D-alanyl-D-alanine + UDP + H(+). The protein operates within cell wall biogenesis; peptidoglycan biosynthesis. In terms of biological role, cell wall formation. Catalyzes the transfer of a GlcNAc subunit on undecaprenyl-pyrophosphoryl-MurNAc-pentapeptide (lipid intermediate I) to form undecaprenyl-pyrophosphoryl-MurNAc-(pentapeptide)GlcNAc (lipid intermediate II). This chain is UDP-N-acetylglucosamine--N-acetylmuramyl-(pentapeptide) pyrophosphoryl-undecaprenol N-acetylglucosamine transferase, found in Exiguobacterium sibiricum (strain DSM 17290 / CCUG 55495 / CIP 109462 / JCM 13490 / 255-15).